The following is a 220-amino-acid chain: N-(5'-phosphoribosyl)anthranilate isomerase (220 aa).

Belongs to the TrpF family.

It carries out the reaction N-(5-phospho-beta-D-ribosyl)anthranilate = 1-(2-carboxyphenylamino)-1-deoxy-D-ribulose 5-phosphate. The protein operates within amino-acid biosynthesis; L-tryptophan biosynthesis; L-tryptophan from chorismate: step 3/5. This is N-(5'-phosphoribosyl)anthranilate isomerase from Xylella fastidiosa (strain M12).